The primary structure comprises 186 residues: MGLKADNWIRKMALEHKMIEPFCEANIGKGVVSYGLSSYGYDIRVGREFKIFTNVNSTVVDPKNFVEENVVDFEGDVCIVPANSFTLARTIEYFKMPDDVLAICLGKSTYARCGIIVNVTPFEPGFEGHITIEISNTTPLPAKIYANEGIAQVLFLQGDEKCDTTYKDKKGKYQAQTGITLPRILK.

Position 107–112 (107–112 (KSTYAR)) interacts with dCTP. Catalysis depends on Glu133, which acts as the Proton donor/acceptor. Gln152, Tyr166, and Gln176 together coordinate dCTP.

This sequence belongs to the dCTP deaminase family. Homotrimer.

It catalyses the reaction dCTP + H2O + H(+) = dUTP + NH4(+). Its pathway is pyrimidine metabolism; dUMP biosynthesis; dUMP from dCTP (dUTP route): step 1/2. Functionally, catalyzes the deamination of dCTP to dUTP. This Campylobacter jejuni (strain RM1221) protein is dCTP deaminase.